A 449-amino-acid chain; its full sequence is Protein cortex (449 aa).

6 WD repeats span residues 108–148 (TYSY…ISQG), 149–188 (YAEY…KIDS), 198–237 (NRNC…ISWR), 283–327 (DSDW…VRDT), 345–382 (TGEL…DQWG), and 386–425 (SGLD…KKMK). Residues 386–397 (SGLDRVRTMVFS) carry the D-box motif.

Belongs to the WD repeat CORT family.

The protein localises to the cytoplasm. In terms of biological role, controls wing pigmentation patterning by regulating scale cell development, thereby playing a key role in mimicry and crypsis. Probably acts as an activator of the anaphase promoting complex/cyclosome (APC/C) that promotes the ubiquitin ligase activity and substrate specificity of the APC/C. This is Protein cortex from Heliconius erato (Crimson patched longwing butterfly).